The following is a 180-amino-acid chain: Nucleoside triphosphate/diphosphate phosphatase (180 aa).

The Proton donor role is filled by arginine 26. Mg(2+) contacts are provided by asparagine 90, aspartate 106, aspartate 108, aspartate 110, aspartate 123, and glutamate 126.

Belongs to the Ntdp family. The cofactor is Mg(2+).

It catalyses the reaction a ribonucleoside 5'-triphosphate + H2O = a ribonucleoside 5'-diphosphate + phosphate + H(+). The catalysed reaction is a ribonucleoside 5'-diphosphate + H2O = a ribonucleoside 5'-phosphate + phosphate + H(+). Its function is as follows. Has nucleoside phosphatase activity towards nucleoside triphosphates and nucleoside diphosphates. The protein is Nucleoside triphosphate/diphosphate phosphatase of Staphylococcus saprophyticus subsp. saprophyticus (strain ATCC 15305 / DSM 20229 / NCIMB 8711 / NCTC 7292 / S-41).